Here is a 283-residue protein sequence, read N- to C-terminus: 1-deoxypentalenic acid 11-beta-hydroxylase (283 aa).

Position 117 (Arg-117) interacts with substrate. Fe cation contacts are provided by His-135 and Asp-137. 2-oxoglutarate is bound by residues 135-137 (HQD) and Trp-151. Arg-186 is a binding site for substrate. A Fe cation-binding site is contributed by His-224. 2-oxoglutarate is bound by residues Ser-226 and Arg-238. Residues 251-283 (HRGFNALTPWPESAKDASKGIMSKITGTPTTAE) are disordered.

The protein belongs to the PhyH family. It depends on Fe cation as a cofactor. Requires L-ascorbate as cofactor.

It catalyses the reaction 1-deoxypentalenate + 2-oxoglutarate + O2 = 1-deoxy-11beta-hydroxypentalenate + succinate + CO2. Its pathway is antibiotic biosynthesis; pentalenolactone biosynthesis. In terms of biological role, catalyzes the conversion of 1-deoxypentalenic acid to 11-beta-hydroxy-1-deoxypentalenic acid in the biosynthesis of pentalenolactone antibiotic. This is 1-deoxypentalenic acid 11-beta-hydroxylase (pntH) from Streptomyces arenae.